Reading from the N-terminus, the 405-residue chain is GTPase Obg (405 aa).

The 159-residue stretch at 1–159 (MKFVDEVSIF…RDLKLELKVL (159 aa)) folds into the Obg domain. A disordered region spans residues 127 to 148 (NTRFKSSTNRAPRQTTPGKPGD). The span at 129-143 (RFKSSTNRAPRQTTP) shows a compositional bias: polar residues. An OBG-type G domain is found at 160 to 333 (ADVGLLGLPN…LSQAIMRYLD (174 aa)). GTP contacts are provided by residues 166–173 (GLPNAGKS), 191–195 (FTTLV), 213–216 (DIPG), 283–286 (NKAD), and 314–316 (SAL). The Mg(2+) site is built by S173 and T193. Residues 373 to 405 (LRRAGVKSVEEADDDDFDDDDDDEGGAEIIYVR) form a disordered region. Acidic residues predominate over residues 383–398 (EADDDDFDDDDDDEGG).

Belongs to the TRAFAC class OBG-HflX-like GTPase superfamily. OBG GTPase family. In terms of assembly, monomer. Mg(2+) is required as a cofactor.

The protein localises to the cytoplasm. An essential GTPase which binds GTP, GDP and possibly (p)ppGpp with moderate affinity, with high nucleotide exchange rates and a fairly low GTP hydrolysis rate. Plays a role in control of the cell cycle, stress response, ribosome biogenesis and in those bacteria that undergo differentiation, in morphogenesis control. The chain is GTPase Obg from Stutzerimonas stutzeri (strain A1501) (Pseudomonas stutzeri).